The chain runs to 206 residues: Large ribosomal subunit protein uL4 (206 aa).

Belongs to the universal ribosomal protein uL4 family. Part of the 50S ribosomal subunit.

One of the primary rRNA binding proteins, this protein initially binds near the 5'-end of the 23S rRNA. It is important during the early stages of 50S assembly. It makes multiple contacts with different domains of the 23S rRNA in the assembled 50S subunit and ribosome. In terms of biological role, forms part of the polypeptide exit tunnel. The chain is Large ribosomal subunit protein uL4 from Desulfatibacillum aliphaticivorans.